The following is a 197-amino-acid chain: Endo-1,4-beta-xylanase A (197 aa).

The GH11 domain maps to 1 to 197 (SGTPSSTGTD…SSGTATITVT (197 aa)). The active-site Nucleophile is the glutamate 87. Residues cysteine 111 and cysteine 160 are joined by a disulfide bond. Glutamate 184 serves as the catalytic Proton donor.

The protein belongs to the glycosyl hydrolase 11 (cellulase G) family.

The protein resides in the secreted. The enzyme catalyses Endohydrolysis of (1-&gt;4)-beta-D-xylosidic linkages in xylans.. It participates in glycan degradation; xylan degradation. Hydrolyzes xylans into xylobiose and xylose. This Schizophyllum commune (Split gill fungus) protein is Endo-1,4-beta-xylanase A (XYNA).